Here is a 175-residue protein sequence, read N- to C-terminus: Probable DNA-directed RNA polymerase subunit delta (175 aa).

The 68-residue stretch at 14-81 (CSMIEVVHSV…GENRWGLRSW (68 aa)) folds into the HTH HARE-type domain. Residues 91-175 (ILPQPKPKKK…DETEEEEEEL (85 aa)) form a disordered region. The segment covering 106-175 (DGFDDYIEED…DETEEEEEEL (70 aa)) has biased composition (acidic residues).

This sequence belongs to the RpoE family. As to quaternary structure, RNAP is composed of a core of 2 alpha, a beta and a beta' subunits. The core is associated with a delta subunit and one of several sigma factors.

Its function is as follows. Participates in both the initiation and recycling phases of transcription. In the presence of the delta subunit, RNAP displays an increased specificity of transcription, a decreased affinity for nucleic acids, and an increased efficiency of RNA synthesis because of enhanced recycling. This Bacillus anthracis protein is Probable DNA-directed RNA polymerase subunit delta.